A 155-amino-acid chain; its full sequence is Non-secretory ribonuclease (155 aa).

The N-terminal stretch at methionine 1–cysteine 25 is a signal peptide. Residue lysine 33 participates in substrate binding. The active-site Proton acceptor is histidine 38. The N-linked (GlcNAc...) asparagine glycan is linked to asparagine 41. 4 disulfide bridges follow: cysteine 47-cysteine 106, cysteine 61-cysteine 118, cysteine 79-cysteine 133, and cysteine 86-cysteine 94. A 3'-nitrotyrosine modification is found at tyrosine 57. Residue lysine 62–threonine 66 participates in substrate binding. Residues asparagine 83, asparagine 88, and asparagine 107 are each glycosylated (N-linked (GlcNAc...) asparagine). Histidine 150 (proton donor) is an active-site residue.

The protein belongs to the pancreatic ribonuclease family. As to quaternary structure, interacts with and forms a tight 1:1 complex with RNH1. Dimerization of two such complexes may occur.

The protein localises to the lysosome. It is found in the cytoplasmic granule. The enzyme catalyses an [RNA] containing cytidine + H2O = an [RNA]-3'-cytidine-3'-phosphate + a 5'-hydroxy-ribonucleotide-3'-[RNA].. The catalysed reaction is an [RNA] containing uridine + H2O = an [RNA]-3'-uridine-3'-phosphate + a 5'-hydroxy-ribonucleotide-3'-[RNA].. Functionally, this is a non-secretory ribonuclease. It is a pyrimidine specific nuclease with a slight preference for U. Cytotoxin and helminthotoxin. Possesses a wide variety of biological activities. This is Non-secretory ribonuclease (Rnase2) from Mus musculus (Mouse).